The primary structure comprises 125 residues: Protein ApaG (125 aa).

The ApaG domain maps to 1-125 (MINSPRVCIQ…FRLAVPTLIH (125 aa)).

This Escherichia coli (strain SE11) protein is Protein ApaG.